The sequence spans 136 residues: Lipoprotein YghG (136 aa).

Residues 1 to 24 form the signal peptide; it reads MSIKQMPGRVLISLLLSVTGLLSG. A lipid anchor (N-palmitoyl cysteine) is attached at Cys25. A lipid anchor (S-diacylglycerol cysteine) is attached at Cys25.

The protein belongs to the GspS/AspS pilotin family.

It is found in the cell outer membrane. Functionally, involved in a type II secretion system (T2SS, formerly general secretion pathway, GSP) for the export of folded proteins across the outer membrane. In a functional T2SS this subunit helps assemble the outer membrane channel. The sequence is that of Lipoprotein YghG (yghG) from Escherichia coli (strain K12).